The sequence spans 273 residues: Tetraspanin-8 (273 aa).

The Cytoplasmic portion of the chain corresponds to 1–7 (MARCSNN). The chain crosses the membrane as a helical span at residues 8-28 (LVGILNFLVFLLSIPILAGGI). Residues 29–45 (WLSQKGSTECERFLDKP) are Extracellular-facing. The helical transmembrane segment at 46-66 (VIALGVFLMVVAIAGLIGSCC) threads the bilayer. At 67–75 (RVTWLLWVY) the chain is on the cytoplasmic side. Residues 76–96 (LFVMFLLILLVFCITVFAFVV) traverse the membrane as a helical segment. The Extracellular segment spans residues 97–235 (TNKGAGEAIE…NVKSAWKKVA (139 aa)). Asn192 carries an N-linked (GlcNAc...) asparagine glycan. A helical membrane pass occupies residues 236–256 (IVNIVFLVFLIIVYSVGCCAF). The Cytoplasmic portion of the chain corresponds to 257–273 (RNNKRDDSYSRTYGYKP).

This sequence belongs to the tetraspanin (TM4SF) family.

The protein resides in the membrane. Its function is as follows. May be involved in the regulation of cell differentiation. In Arabidopsis thaliana (Mouse-ear cress), this protein is Tetraspanin-8 (TET8).